The chain runs to 180 residues: Acireductone dioxygenase (180 aa).

The Fe(2+) site is built by His-97, His-99, Glu-103, and His-141. His-97, His-99, Glu-103, and His-141 together coordinate Ni(2+).

It belongs to the acireductone dioxygenase (ARD) family. In terms of assembly, monomer. Requires Fe(2+) as cofactor. The cofactor is Mg(2+). Ni(2+) is required as a cofactor. It depends on Mn(2+) as a cofactor. Co(2+) serves as cofactor.

It catalyses the reaction 1,2-dihydroxy-5-(methylsulfanyl)pent-1-en-3-one + O2 = 3-(methylsulfanyl)propanoate + CO + formate + 2 H(+). The catalysed reaction is 1,2-dihydroxy-5-(methylsulfanyl)pent-1-en-3-one + O2 = 4-methylsulfanyl-2-oxobutanoate + formate + 2 H(+). It functions in the pathway amino-acid biosynthesis; L-methionine biosynthesis via salvage pathway; L-methionine from S-methyl-5-thio-alpha-D-ribose 1-phosphate: step 5/6. In terms of biological role, catalyzes 2 different reactions between oxygen and the acireductone 1,2-dihydroxy-3-keto-5-methylthiopentene (DHK-MTPene) depending upon the metal bound in the active site. Fe-containing acireductone dioxygenase (Fe-ARD) produces formate and 2-keto-4-methylthiobutyrate (KMTB), the alpha-ketoacid precursor of methionine in the methionine recycle pathway. Ni-containing acireductone dioxygenase (Ni-ARD) produces methylthiopropionate, carbon monoxide and formate, and does not lie on the methionine recycle pathway. The polypeptide is Acireductone dioxygenase (mtnD) (Klebsiella oxytoca).